Consider the following 813-residue polypeptide: Leucine--tRNA ligase (813 aa).

The 'HIGH' region signature appears at 39–49 (PYPSGRIHMGH). The short motif at 582 to 586 (KMSKS) is the 'KMSKS' region element. Lys585 is a binding site for ATP.

It belongs to the class-I aminoacyl-tRNA synthetase family.

The protein localises to the cytoplasm. The enzyme catalyses tRNA(Leu) + L-leucine + ATP = L-leucyl-tRNA(Leu) + AMP + diphosphate. This is Leucine--tRNA ligase from Campylobacter hominis (strain ATCC BAA-381 / DSM 21671 / CCUG 45161 / LMG 19568 / NCTC 13146 / CH001A).